The chain runs to 197 residues: UPF0215 protein MK0057 (197 aa).

This sequence belongs to the UPF0215 family.

The protein is UPF0215 protein MK0057 of Methanopyrus kandleri (strain AV19 / DSM 6324 / JCM 9639 / NBRC 100938).